The sequence spans 321 residues: Cytochrome c biogenesis protein CcsA (321 aa).

Helical transmembrane passes span 9–29 (ILTH…LITL), 44–64 (GMIA…VSSG), 68–88 (LSNL…LHTI), 143–163 (MLLS…LLII), 225–245 (VISL…VWAN), 259–273 (TWAF…IYLH), and 288–308 (VASI…LLGI).

This sequence belongs to the CcmF/CycK/Ccl1/NrfE/CcsA family. As to quaternary structure, may interact with Ccs1.

It is found in the plastid. Its subcellular location is the chloroplast thylakoid membrane. Its function is as follows. Required during biogenesis of c-type cytochromes (cytochrome c6 and cytochrome f) at the step of heme attachment. In Zea mays (Maize), this protein is Cytochrome c biogenesis protein CcsA.